A 197-amino-acid chain; its full sequence is dTTP/UTP pyrophosphatase (197 aa).

Residue Asp70 is the Proton acceptor of the active site.

Belongs to the Maf family. YhdE subfamily. The cofactor is a divalent metal cation.

Its subcellular location is the cytoplasm. The enzyme catalyses dTTP + H2O = dTMP + diphosphate + H(+). The catalysed reaction is UTP + H2O = UMP + diphosphate + H(+). Its function is as follows. Nucleoside triphosphate pyrophosphatase that hydrolyzes dTTP and UTP. May have a dual role in cell division arrest and in preventing the incorporation of modified nucleotides into cellular nucleic acids. The sequence is that of dTTP/UTP pyrophosphatase from Methanosarcina mazei (strain ATCC BAA-159 / DSM 3647 / Goe1 / Go1 / JCM 11833 / OCM 88) (Methanosarcina frisia).